The primary structure comprises 156 residues: Small ribosomal subunit protein uS7 (156 aa).

It belongs to the universal ribosomal protein uS7 family. As to quaternary structure, part of the 30S ribosomal subunit. Contacts proteins S9 and S11.

Its function is as follows. One of the primary rRNA binding proteins, it binds directly to 16S rRNA where it nucleates assembly of the head domain of the 30S subunit. Is located at the subunit interface close to the decoding center, probably blocks exit of the E-site tRNA. This Histophilus somni (strain 129Pt) (Haemophilus somnus) protein is Small ribosomal subunit protein uS7.